The sequence spans 379 residues: Chorismate synthase (379 aa).

Residues arginine 48 and arginine 54 each coordinate NADP(+). FMN is bound by residues 125-127, 241-242, glycine 286, 301-305, and arginine 327; these read RSS, NA, and KPTSS.

Belongs to the chorismate synthase family. As to quaternary structure, homotetramer. It depends on FMNH2 as a cofactor.

The enzyme catalyses 5-O-(1-carboxyvinyl)-3-phosphoshikimate = chorismate + phosphate. It functions in the pathway metabolic intermediate biosynthesis; chorismate biosynthesis; chorismate from D-erythrose 4-phosphate and phosphoenolpyruvate: step 7/7. Its function is as follows. Catalyzes the anti-1,4-elimination of the C-3 phosphate and the C-6 proR hydrogen from 5-enolpyruvylshikimate-3-phosphate (EPSP) to yield chorismate, which is the branch point compound that serves as the starting substrate for the three terminal pathways of aromatic amino acid biosynthesis. This reaction introduces a second double bond into the aromatic ring system. The sequence is that of Chorismate synthase from Rhodospirillum centenum (strain ATCC 51521 / SW).